The sequence spans 266 residues: ATP synthase subunit a (266 aa).

The next 5 membrane-spanning stretches (helical) occupy residues serine 28–phenylalanine 48, leucine 88–leucine 108, aspartate 141–isoleucine 161, leucine 206–tryptophan 226, and alanine 237–valine 257.

The protein belongs to the ATPase A chain family. In terms of assembly, F-type ATPases have 2 components, CF(1) - the catalytic core - and CF(0) - the membrane proton channel. CF(1) has five subunits: alpha(3), beta(3), gamma(1), delta(1), epsilon(1). CF(0) has three main subunits: a(1), b(2) and c(9-12). The alpha and beta chains form an alternating ring which encloses part of the gamma chain. CF(1) is attached to CF(0) by a central stalk formed by the gamma and epsilon chains, while a peripheral stalk is formed by the delta and b chains.

The protein localises to the cell inner membrane. In terms of biological role, key component of the proton channel; it plays a direct role in the translocation of protons across the membrane. This Pectobacterium atrosepticum (strain SCRI 1043 / ATCC BAA-672) (Erwinia carotovora subsp. atroseptica) protein is ATP synthase subunit a.